Reading from the N-terminus, the 111-residue chain is Disintegrin DS-AS (111 aa).

An N-terminal signal peptide occupies residues 1-20 (MIQVLLVIICLAVFPYQGSC). Positions 21–47 (IILESGNVNDYEIVYPKKLIVLPTGAM) are excised as a propeptide. In terms of domain architecture, Disintegrin spans 47 to 111 (MNSPHPCCDP…PDCPRNPYKD (65 aa)). 4 cysteine pairs are disulfide-bonded: Cys-53/Cys-76, Cys-67/Cys-73, Cys-72/Cys-97, and Cys-85/Cys-104. A Cell attachment site motif is present at residues 89-91 (RGD).

Heterodimer; disulfide-linked.

Its subcellular location is the secreted. Its function is as follows. Inhibits ADP-induced platelet aggregation in human platelet-rich plasma (IC(50) is 8 uM). This chain is Disintegrin DS-AS, found in Atheris squamigera (Variable bush viper).